The primary structure comprises 224 residues: Inhibitor of apoptosis protein (224 aa).

One copy of the BIR repeat lies at 29–92 (VDARNQSFAI…GFWSRNCGFM (64 aa)). Positions 62, 65, 82, and 89 each coordinate Zn(2+). Residues 189–207 (CMTCGIEPIKKDENFCNAC) form a C4-type zinc finger.

Belongs to the asfivirus IAP family. As to quaternary structure, interacts with subunit p17 of host CASP3.

It is found in the host cytoplasm. The protein localises to the virion. Functionally, prevent apoptosis of host cell by inhibiting caspase-3/CASP3 activation to promote the viral replication. Also induces the activation of host NF-kappaB. The sequence is that of Inhibitor of apoptosis protein from Ornithodoros (relapsing fever ticks).